Reading from the N-terminus, the 347-residue chain is UDP-3-O-acylglucosamine N-acyltransferase (347 aa).

His241 (proton acceptor) is an active-site residue.

Belongs to the transferase hexapeptide repeat family. LpxD subfamily. In terms of assembly, homotrimer.

The catalysed reaction is a UDP-3-O-[(3R)-3-hydroxyacyl]-alpha-D-glucosamine + a (3R)-hydroxyacyl-[ACP] = a UDP-2-N,3-O-bis[(3R)-3-hydroxyacyl]-alpha-D-glucosamine + holo-[ACP] + H(+). It participates in bacterial outer membrane biogenesis; LPS lipid A biosynthesis. Its function is as follows. Catalyzes the N-acylation of UDP-3-O-acylglucosamine using 3-hydroxyacyl-ACP as the acyl donor. Is involved in the biosynthesis of lipid A, a phosphorylated glycolipid that anchors the lipopolysaccharide to the outer membrane of the cell. In Neisseria meningitidis serogroup A / serotype 4A (strain DSM 15465 / Z2491), this protein is UDP-3-O-acylglucosamine N-acyltransferase.